Here is a 1588-residue protein sequence, read N- to C-terminus: Paternally-expressed gene 3 protein (1588 aa).

One can recognise an SCAN box domain in the interval 46–128 (HQRFRNLIYV…TLLENYKEMY (83 aa)). Disordered regions lie at residues 128–230 (YQPE…ESYQ), 266–306 (DGHS…RRGI), and 319–349 (KFIK…MSDD). The segment covering 129–142 (QPEDDNNSDVTSDD) has biased composition (acidic residues). Basic and acidic residues-rich tracts occupy residues 143–152 (DMTRNRRESS), 161–182 (SGDR…DRWS), 206–225 (FEMD…RSQD), and 295–306 (PEAKKSTHRRGI). 3 consecutive C2H2-type zinc fingers follow at residues 454 to 476 (YVCD…QIMH), 507 to 529 (FECK…RKIH), and 565 to 587 (YECR…QKIH). The span at 588–607 (FGDDKDNEREHERERERGET) shows a compositional bias: basic and acidic residues. Residues 588 to 610 (FGDDKDNEREHERERERGETFRP) form a disordered region. The C2H2-type 4 zinc-finger motif lies at 627 to 649 (YECKVCGETFLHSSSLKEHQKIH). The disordered stretch occupies residues 838-930 (LVASKPPRSH…EFSVPSSNVR (93 aa)). Positions 868 to 881 (LNDKRQKIPARENP) are enriched in basic and acidic residues. Residues 969–991 (YECQECGECFAHSSDLTEHQKIH) form a C2H2-type 5 zinc finger. The disordered stretch occupies residues 1056–1104 (EKSHGEESQGENTDGEETHSEETHGQETIEDPVIQGSDMEDPQKDDPDD). A compositionally biased stretch (basic and acidic residues) spans 1071 to 1082 (EETHSEETHGQE). C2H2-type zinc fingers lie at residues 1107 to 1129 (YECE…QKVH), 1163 to 1185 (YECP…QRIH), 1225 to 1247 (IRCL…MRLH), 1282 to 1304 (FECA…VTVH), and 1332 to 1354 (YECK…KELH). Residues 1393 to 1495 (EAAEPEVEAX…GIEDPEEGED (103 aa)) are disordered. Acidic residues predominate over residues 1395–1415 (AEPEVEAXEPEVEAAEPEVEA). A run of 7 repeats spans residues 1397 to 1403 (PEVEAXE), 1404 to 1410 (PEVEAAE), 1411 to 1417 (PEVEAAE), 1418 to 1422 (PNGEA), 1425 to 1429 (PDGEA), 1432 to 1436 (PIGEA), and 1439 to 1443 (PNGEA). Positions 1397-1417 (PEVEAXEPEVEAAEPEVEAAE) are 3 X 7 AA repeat of P-E-V-E-A-A-E. The tract at residues 1418–1443 (PNGEAEGPDGEAAEPIGEAGQPNGEA) is 4 X 5 AA repeat of P-X-G-E-A. 2 stretches are compositionally biased toward acidic residues: residues 1449 to 1466 (DADE…ERAE) and 1475 to 1495 (PEGD…EGED). 2 consecutive C2H2-type zinc fingers follow at residues 1505–1527 (YDCH…LKTH) and 1564–1586 (FKCD…QNTH).

The protein belongs to the krueppel C2H2-type zinc-finger protein family. Homodimer. Interacts with SIAH1A and SIAH2. Interacts with TRAF2.

Its subcellular location is the nucleus. It is found in the cytoplasm. In terms of biological role, induces apoptosis in cooperation with SIAH1A. Acts as a mediator between p53/TP53 and BAX in a neuronal death pathway that is activated by DNA damage. Acts synergistically with TRAF2 and inhibits TNF induced apoptosis through activation of NF-kappa-B. The polypeptide is Paternally-expressed gene 3 protein (PEG3) (Pan paniscus (Pygmy chimpanzee)).